Here is a 454-residue protein sequence, read N- to C-terminus: Natural cytotoxicity triggering receptor 3 ligand 1 (454 aa).

Residues 1–24 form the signal peptide; sequence MTWRAAASTCAALLILLWALTTEG. Topologically, residues 25-262 are extracellular; the sequence is DLKVEMMAGG…SETEKTDNFS (238 aa). In terms of domain architecture, Ig-like V-type spans 27–138; the sequence is KVEMMAGGTQ…LKAQGTVQLE (112 aa). Asn-43 and Asn-57 each carry an N-linked (GlcNAc...) asparagine glycan. A disulfide bridge links Cys-48 with Cys-122. 2 interaction with NCR3 regions span residues 59–62 and 127–130; these read TSMG and TPLK. Residues 143–244 enclose the Ig-like C1-type domain; sequence PASRLLLDQV…LHTPLRSNFT (102 aa). Cys-163 and Cys-228 are oxidised to a cystine. N-linked (GlcNAc...) asparagine glycosylation is found at Asn-174, Asn-208, Asn-216, Asn-242, and Asn-260. Residues 263 to 283 traverse the membrane as a helical segment; the sequence is IHWWPISFIGVGLVLLIVLIP. The Cytoplasmic portion of the chain corresponds to 284 to 454; it reads WKKICNKSSS…QPPTLLLPLQ (171 aa). The tract at residues 291-429 is retroviral-Gag-like; sequence SSSAYTPLKC…APILPVSPIW (139 aa). The disordered stretch occupies residues 395–454; the sequence is GKSIDDNSTKSEKQTPREHSDAVPDAPILPVSPIWEPPPATTSTTPVLSSQPPTLLLPLQ. Positions 397-416 are enriched in basic and acidic residues; it reads SIDDNSTKSEKQTPREHSDA. Positions 435-454 are enriched in low complexity; the sequence is TTSTTPVLSSQPPTLLLPLQ.

Monomer. Interacts specifically with NCR3, but not with other natural killer cell-activating receptors, including NCR1, NCR2 and KLRK1. In terms of tissue distribution, not detected in any normal tissue tested. Expressed at the surface of several tumor cell lines including T and B-lymphomas, myeloid leukemias, melanomas, carcinomas and large T SV40 antigen-transformed cells (at protein level).

Its subcellular location is the cell membrane. Functionally, triggers NCR3-dependent natural killer cell activation. This chain is Natural cytotoxicity triggering receptor 3 ligand 1 (NCR3LG1), found in Homo sapiens (Human).